The following is a 4910-amino-acid chain: MSQDRILLDLDVVNQRLILFNSAFPSDAIEAPFHFSNKESTSENLDNLAGTILHSRSITGHVFLYKHIFLEIVARWIKDSKKKDYVLVIEKLASIITIFPVAMPLIEDYLDKENDHFITILQNPSTQKDSDMFKILLAYYRLLYHNKEVFARFIQPDILYQLVDLLTKEQENQVVIFLALKVLSLYLDMGEKTLNDMLDTYIKSRDSLLGHFEGDSGIDYSFLELNEAKRCANFSKLPSVPECFTIEKKSSYFIIEPQDLSTKVASICGVIVPKVHTIHDKVFYPLTFVPTHKTVSSLRQLGRKIQNSTPIMLIGKAGSGKTFLINELSKYMGCHDSIVKIHLGEQTDAKLLIGTYTSGDKPGTFEWRAGVLATAVKEGRWVLIEDIDKAPTDVLSILLSLLEKRELTIPSRGETVKAANGFQLISTVRINEDHQKDSSNKIYNLNMIGMRIWNVIELEEPSEEDLTHILAQKFPILTNLIPKLIDSYKNVKSIYMNTKFISLNKGAHTRVVSVRDLIKLCERLDILFKNNGINKPDQLIQSSVYDSIFSEAADCFAGAIGEFKALEPIIQAIGESLDIASSRISLFLTQHVPTLENLDDSIKIGRAVLLKEKLNIQKKSMNSTLFAFTNHSLRLMEQISVCIQMTEPVLLVGETGTGKTTVVQQLAKMLAKKLTVINVSQQTETGDLLGGYKPVNSKTVAVPIQENFETLFNATFSLKKNEKFHKMLHRCFNKNQWKNVVKLWNEAYKMAQSILKITNTENENENAKKKKRRLNTHEKKLLLDKWADFNDSVKKFEAQSSSIENSFVFNFVEGSLVKTIRAGEWLLLDEVNLATADTLESISDLLTEPDSRSILLSEKGDAEPIKAHPDFRIFACMNPATDVGKRDLPMGIRSRFTEIYVHSPERDITDLLSIIDKYIGKYSVSDEWVGNDIAELYLEAKKLSDNNTIVDGSNQKPHFSIRTLTRTLLYVTDIIHIYGLRRSLYDGFCMSFLTLLDQKSEAILKPVIEKFTLGRLKNVKSIMSQTPPSPGPDYVQFKHYWMKKGPNTIQEQAHYIITPFVEKNMMNLVRATSGKRFPVLIQGPTSSGKTSMIKYLADITGHKFVRINNHEHTDLQEYLGTYVTDDTGKLSFKEGVLVEALRKGYWIVLDELNLAPTDVLEALNRLLDDNRELFIPETQEVVHPHPDFLLFATQNPPGIYGGRKILSRAFRNRFLELHFDDIPQDELEIILRERCQIAPSYAKKIVEVYRQLSIERSASRLFEQKNSFATLRDLFRWALRDAVGYEQLAASGYMLLAERCRTPQEKVTVKKTLEKVMKVKLDMDQYYASLEDKSLEAIGSVTWTKGMRRLSVLVSSCLKNKEPVLLVGETGCGKTTICQLLAQFMGRELITLNAHQNTETGDILGAQRPVRNRSEIQYKLIKSLKTALNIANDQDVDLKELLQLYSKSDNKNIAEDVQLEIQKLRDSLNVLFEWSDGPLIQAMRTGNFFLLDEISLADDSVLERLNSVLEPERSLLLAEQGSSDSLVTASENFQFFATMNPGGDYGKKELSPALRNRFTEIWVPSMEDFNDVNMIVSSRLLEDLKDLANPIVKFSEWFGKKLGGGNATSGVISLRDILAWVEFINKVFPKIQNKSTALIQGASMVFIDALGTNNTAYLAENENDLKSLRTECIIQLLKLCGDDLELQQIETNEIIVTQDELQVGMFKIPRFPDAQSSSFNLTAPTTASNLVRVVRAMQVHKPILLEGSPGVGKTSLITALANITGNKLTRINLSEQTDLVDLFGADAPGERSGEFLWHDAPFLRAMKKGEWVLLDEMNLASQSVLEGLNACLDHRGEAYIPELDISFSCHPNFLVFAAQNPQYQGGGRKGLPKSFVNRFSVVFIDMLTSDDLLLIAKHLYPSIEPDIIAKMIKLMSTLEDQVCKRKLWGNSGSPWEFNLRDTLRWLKLLNQYSICEDVDVFDFVDIIVKQRFRTISDKNKAQLLIEDIFGKFSTKENFFKLTEDYVQINNEVALRNPHYRYPITQNLFPLECNVAVYESVLKAINNNWPLVLVGPSNSGKTETIRFLASILGPRVDVFSMNSDIDSMDILGGYEQVDLTRQISYITEELTNIVREIISMNMKLSPNATAIMEGLNLLKYLLNNIVTPEKFQDFRNRFNRFFSHLEGHPLLKTMSMNIEKMTEIITKEASVKFEWFDGMLVKAVEKGHWLILDNANLCSPSVLDRLNSLLEIDGSLLINECSQEDGQPRVLKPHPNFRLFLTMDPKYGELSRAMRNRGVEIYIDELHSRSTAFDRLTLGFELGENIDFVSIDDGIKKIKLNEPDMSIPLKHYVPSYLSRPCIFAQVHDILLLSDEEPIEESLAAVIPISHLGEVGKWANNVLNCTEYSEKKIAERLYVFITFLTDMGVLEKINNLYKPANLKFQKALGLHDKQLTEETVSLTLNEYVLPTVSKYSDKIKSPESLYLLSSLRLLLNSLNALKLINEKSTHGKIDELTYIELSAAAFNGRHLKNIPRIPIFCILYNILTVMSENLKTESLFCGSNQYQYYWDLLVIVIAALETAVTKDEARLRVYKELIDSWIASVKSKSDIEITPFLNINLEFTDVLQLSRGHSITLLWDIFRKNYPTTSNSWLAFEKLINLSEKFDKVRLLQFSESYNSIKDLMDVFRLLNDDVLNNKLSEFNLLLSKLEDGINELELISNKFLNKRKHYFADEFDNLIRYTFSVDTAELIKELAPASSLATQKLTKLITNKYNYPPIFDVLWTEKNAKLTSFTSTIFSSQFLEDVVRKSNNLKSFSGNQIKQSISDAELLLSSTIKCSPNLLKSQMEYYKNMLLSWLRKVIDIHVGGDCLKLTLKELCSLIEEKTASETRVTFAEYIFPALDLAESSKSLEELGEAWITFGTGLLLLFVPDSPYDPAIHDYVLYDLFLKTKTFSQNLMKSWRNVRKVISGDEEIFTEKLINTISDDDAPQSPRVYRTGMSIDSLFDEWMAFLSSTMSSRQIKELVSSYKCNSDQSDRRLEMLQQNSAHFLNRLESGYSKFADLNDILAGYIYSINFGFDLLKLQKSKDRASFQISPLWSMDPINISCAENVLSAYHELSRFFKKGDMEDTSIEKVLMYFLTLFKFHKRDTNLLEIFEAALYTLYSRWSVRRFRQEQEENEKSNMFKFNDNSDDYEADFRKLFPDYEDTALVTNEKDISSPENLDDIYFKLADTYISVFDKDHDANFSSELKSGAIITTILSEDLKNTRIEELKSGSLSAVINTLDAETQSFKNTEVFGNIDFYHDFSIPEFQKAGDIIETVLKSVLKLLKQWPEHATLKELYRVSQEFLNYPIKTPLARQLQKIEQIYTYLAEWEKYASSEVSLNNTVKLITDLIVSWRKLELRTWKGLFNSEDAKTRKSIGKWWFYLYESIVISNFVSEKKETAPNATLLVSSLNLFFSKSTLGEFNARLDLVKAFYKHIQLIGLRSSKIAGLLHNTIKFYYQFKPLIDERITNGKKSLEKEIDDIILLASWKDVNVDALKQSSRKSHNNLYKIVRKYRDLLNGDAKTIIEAGLLYSNENKLKLPTLKQHFYEDPNLEASKNLVKEISTWSMRAAPLRNIDTVASNMDSYLEKISSQEFPNFADLASDFYAEAERLRKETPNVYTKENKKRLAYLKTQKSKLLGDALKELRRIGLKVNFREDIQKVQSSTTTILANIAPFNNEYLNSSDAFFFKILDLLPKLRSAASNPSDDIPVAAIERGMALAQSLMFSLITVRHPLSEFTNDYCKINGMMLDLEHFTCLKGDIVHSSLKANVDNVRLFEKWLPSLLDYAAQTLSVISKYSATSEQQKILLDAKSTLSSFFVHFNSSRIFDSSFIESYSRFELFINELLKKLENAKETGNAFVFDIIIEWIKANKGGPIKKEQKRGPSVEDVEQAFRRTFTSIILSFQKVIGDGIESISETDDNWLSASFKKVMVNVKLLRSSVVSKNIETALSLLKDFDFTTTESIYVKSVISFTLPVITRYYNAMTVVLERSRIYYTNTSRGMYILSTILHSLAKNGFCSPQPPSEEVDDKNLQEGTGLGDGEGAQNNNKDVEQDEDLTEDAQNENKEQQDKDERDDENEDDAVEMEGDMAGELEDLSNGEENDDEDTDSEEEELDEEIDDLNEDDPNAIDDKMWDDKASDNSKEKDTDQNLDGKNQEEDVQAAENDEQQRDNKEGGDEDPNAPEDGDEEIENDENAEEENDVGEQEDEVKDEEGEDLEANVPEIETLDLPEDMNLDSEHEESDEDVDMSDGMPDDLNKEEVGNEDEEVKQESGIESDNENDEPGPEEDAGETETALDEEEGAEEDVDMTNDEGKEDEENGPEEQAMSDEEELKQDAAMEENKEKGGEQNTEGLDGVEEKADTEDIDQEAAVQQDSGSKGAGADATDTQEQDDVGGSGTTQNTYEEDQEDVTKNNEESREEATAALKQLGDSMKEYHRRRQDIKEAQTNGEEDENLEKNNERPDEFEHVEGANTETDTQALGSATQDQLQTIDEDMAIDDDREEQEVDQKELVEDADDEKMDIDEEEMLSDIDAHDANNDVDSKKSGFIGKRKSEEDFENELSNEHFSADQEDDSEIQSLIENIEDNPPDASASLTPERSLEESRELWHKSEISTADLVSRLGEQLRLILEPTLATKLKGDYKTGKRLNMKRIIPYIASQFRKDKIWLRRTKPSKRQYQIMIALDDSKSMSESKCVKLAFDSLCLVSKTLTQLEAGGLSIVKFGENIKEVHSFDQQFSNESGARAFQWFGFQETKTDVKKLVAESTKIFERARAMVHNDQWQLEIVISDGICEDHETIQKLVRRARENKIMLVFVIIDGITSNESILDMSQVNYIPDQYGNPQLKITKYLDTFPFEFYVVVHDISELPEMLSLILRQYFTDLASS.

AAA-ATPase protomer stretches follow at residues 305–528 and 636–975; these read IQNS…DILF and MEQI…TDII. ATP is bound by residues 315–322 and 653–660; these read GKAGSGKT and GETGTGKT. Residues 695–803 are interaction with RIX1; that stretch reads VNSKTVAVPI…KKFEAQSSSI (109 aa). T1026 is modified (phosphothreonine). AAA-ATPase protomer stretches follow at residues 1054–1280, 1345–1624, 1732–1985, and 2036–2286; these read HYII…WALR, KGMR…VEFI, RVVR…QLLI, and VYES…DELH. Residues 1083–1090, 1368–1375, 1747–1754, and 2054–2061 each bind ATP; these read GPTSSGKT, GETGCGKT, GSPGVGKT, and GPSNSGKT. The interval 2372–4075 is linker; the sequence is EVGKWANNVL…DGEGAQNNNK (1704 aa). At S2971 the chain carries Phosphoserine. Disordered stretches follow at residues 4045 to 4547, 4555 to 4574, and 4579 to 4600; these read SPQP…EKMD, SDIDAHDANNDVDSKKSGFI, and SEEDFENELSNEHFSADQEDDS. Positions 4078–4088 are enriched in acidic residues; it reads EQDEDLTEDAQ. Residues 4089–4098 are compositionally biased toward basic and acidic residues; that stretch reads NENKEQQDKD. Positions 4099 to 4154 are enriched in acidic residues; that stretch reads ERDDENEDDAVEMEGDMAGELEDLSNGEENDDEDTDSEEEELDEEIDDLNEDDPNA. The segment covering 4155-4174 has biased composition (basic and acidic residues); that stretch reads IDDKMWDDKASDNSKEKDTD. Acidic residues-rich tracts occupy residues 4202 to 4244, 4251 to 4274, and 4288 to 4358; these read GDED…EDLE, ETLDLPEDMNLDSEHEESDEDVDM, and GNED…EEEL. S4353 bears the Phosphoserine mark. Residues 4359-4372 are compositionally biased toward basic and acidic residues; the sequence is KQDAAMEENKEKGG. A Phosphothreonine modification is found at T4388. 2 stretches are compositionally biased toward basic and acidic residues: residues 4435-4447 and 4481-4495; these read DVTKNNEESREEA and LEKNNERPDEFEHVE. Polar residues predominate over residues 4498-4516; the sequence is NTETDTQALGSATQDQLQT. Acidic residues predominate over residues 4517–4531; it reads IDEDMAIDDDREEQE. Position 4555 is a phosphoserine (S4555). Residues 4557 to 4570 are compositionally biased toward basic and acidic residues; sequence IDAHDANNDVDSKK. Residues 4704–4899 enclose the VWFA domain; sequence QIMIALDDSK…SELPEMLSLI (196 aa).

This sequence belongs to the midasin family. Associates with pre-60S ribosomes in the nucleoplasm. Interacts (via its hexameric AAA ATPase ring) with the RIX1 complex (via RIX1); this interaction is crucial for recruitment of MDN1 to the pre-ribosomal particle. Interacts (via VWFA/MIDAS domain) with YTM1 (via UBL domain). Interacts (via VWFA/MIDAS domain) with RSA4 (via UBL domain).

It localises to the nucleus. The protein localises to the nucleolus. It is found in the nucleoplasm. Nuclear chaperone required for maturation and nuclear export of pre-60S ribosome subunits. Functions at successive maturation steps to remove ribosomal factors at critical transition points, first driving the exit of early pre-60S particles from the nucleolus and then driving late pre-60S particles from the nucleus. At an early stage in 60S maturation, mediates the dissociation of the NOP7 complex (YTM1-ERB1-NOP7) from early pre-60S particles, rendering them competent for export from the nucleolus to the nucleoplasm. Subsequently recruited to the nucleoplasmic particles through interaction with the RIX1 complex. This binding is only possible if the 5S RNP at the central protuberance has undergone the rotation to complete its maturation. After remodeling, removes the ribosome biogenesis factor RSA4 in an ATP hydrolysis-driven step from pre-60S ribosomal subunits, rendering them competent for export from the nucleoplasm to the cytoplasm. Activates the GTPase activity of NOG2, which disengages from the pre-60S particle upon GTP hydrolysis, thus freeing its binding site for the nuclear export factor NMD3. The polypeptide is Midasin (MDN1) (Saccharomyces cerevisiae (strain ATCC 204508 / S288c) (Baker's yeast)).